Reading from the N-terminus, the 208-residue chain is V-type ATP synthase subunit D (208 aa).

The protein belongs to the V-ATPase D subunit family.

Functionally, produces ATP from ADP in the presence of a proton gradient across the membrane. The protein is V-type ATP synthase subunit D of Streptococcus pyogenes serotype M1.